A 225-amino-acid polypeptide reads, in one-letter code: Redox-sensing transcriptional repressor Rex (225 aa).

The H-T-H motif DNA-binding region spans 16–55 (IYYRYLNILLDADKKRVSSTELSEAVKVDSATIRRDFSYF). 90–95 (GVGNLG) contributes to the NAD(+) binding site.

The protein belongs to the transcriptional regulatory Rex family. As to quaternary structure, homodimer.

It is found in the cytoplasm. In terms of biological role, modulates transcription in response to changes in cellular NADH/NAD(+) redox state. The sequence is that of Redox-sensing transcriptional repressor Rex from Lactiplantibacillus plantarum (strain ATCC BAA-793 / NCIMB 8826 / WCFS1) (Lactobacillus plantarum).